A 717-amino-acid polypeptide reads, in one-letter code: Pre-mRNA-splicing factor ATP-dependent RNA helicase DEAH10 (717 aa).

Residues 1–29 (MPSMAQGELKSFVQNSRPNPKSPTVSPFS) form a disordered region. The segment covering 12–29 (FVQNSRPNPKSPTVSPFS) has biased composition (polar residues). A Helicase ATP-binding domain is found at 51–256 (VEEVQKNDIL…FGGAKAVHVQ (206 aa)). 64–71 (GETGSGKT) provides a ligand contact to ATP. A DEAH box motif is present at residues 162-165 (DEAH). The Helicase C-terminal domain maps to 278–453 (TLVTIFQIHF…NIILQLKALG (176 aa)).

Belongs to the DEAD box helicase family. DEAH subfamily. PRP22 sub-subfamily. As to expression, widely expressed but spatially and temporally regulated during development.

The protein localises to the nucleus. It localises to the nucleolus. It catalyses the reaction ATP + H2O = ADP + phosphate + H(+). In terms of biological role, involved in pre-mRNA splicing. Plays a role during development in processes such as meristem maintenance, leaf morphogenesis and root morphogenesis. This Arabidopsis thaliana (Mouse-ear cress) protein is Pre-mRNA-splicing factor ATP-dependent RNA helicase DEAH10.